The following is a 107-amino-acid chain: Large ribosomal subunit protein uL24 (107 aa).

This sequence belongs to the universal ribosomal protein uL24 family. In terms of assembly, part of the 50S ribosomal subunit.

One of two assembly initiator proteins, it binds directly to the 5'-end of the 23S rRNA, where it nucleates assembly of the 50S subunit. In terms of biological role, one of the proteins that surrounds the polypeptide exit tunnel on the outside of the subunit. This chain is Large ribosomal subunit protein uL24, found in Mesomycoplasma hyopneumoniae (strain J / ATCC 25934 / NCTC 10110) (Mycoplasma hyopneumoniae).